The sequence spans 68 residues: Large ribosomal subunit protein bL31 (68 aa).

4 residues coordinate Zn(2+): cysteine 16, cysteine 18, cysteine 38, and cysteine 41.

This sequence belongs to the bacterial ribosomal protein bL31 family. Type A subfamily. As to quaternary structure, part of the 50S ribosomal subunit. It depends on Zn(2+) as a cofactor.

Binds the 23S rRNA. The protein is Large ribosomal subunit protein bL31 of Thiobacillus denitrificans (strain ATCC 25259 / T1).